We begin with the raw amino-acid sequence, 182 residues long: Ribosome hibernation promotion factor (182 aa).

This sequence belongs to the HPF/YfiA ribosome-associated protein family. Long HPF subfamily. Interacts with 100S ribosomes.

The protein localises to the cytoplasm. Its function is as follows. Required for dimerization of active 70S ribosomes into 100S ribosomes in stationary phase; 100S ribosomes are translationally inactive and sometimes present during exponential growth. This Streptococcus pyogenes serotype M6 (strain ATCC BAA-946 / MGAS10394) protein is Ribosome hibernation promotion factor.